Consider the following 484-residue polypeptide: Gasdermin-D (484 aa).

A Phosphotyrosine modification is found at Tyr-37. Position 56 is an S-(2-succinyl)cysteine (Cys-56). The next 2 beta stranded transmembrane spans lie at 91–97 (QGSVELA) and 103–108 (KIAGGA). Tyr-158 is modified (phosphotyrosine). 2 beta stranded membrane passes run 180–186 (GSGRFSL) and 191–197 (CLQGEGQ). Phosphoserine is present on Ser-185. S-(2-succinyl)cysteine is present on residues Cys-191 and Cys-268. The S-palmitoyl cysteine moiety is linked to residue Cys-191. A linker helix loop region spans residues 277–296 (VPAEGAFTEDFQGLRAEVET). Residue Cys-309 is modified to S-(2-succinyl)cysteine. Residue Ser-338 is glycosylated (O-linked (GlcNAc) serine). Residue Cys-467 is modified to S-(2-succinyl)cysteine.

It belongs to the gasdermin family. In terms of assembly, homooligomer; homooligomeric ring-shaped pore complex containing 27-28 subunits when inserted in the membrane. Homooligomerization is promoted by the mTORC1 complex in macrophages. In response to a canonical inflammasome stimulus, such as nigericin, recruited to NLRP3 inflammasone with similar kinetics to that of uncleaved CASP1 precursor. Although this recruitment is also observed in the absence of PYCARD, it is more efficient in its presence. Post-translationally, cleavage at Asp-275 by CASP1 (mature and uncleaved precursor forms), CASP4, CASP5 or CASP8 relieves autoinhibition and is sufficient to initiate pyroptosis. Cleavage by CASP1 and CASP4 is not strictly dependent on the consensus cleavage site on GSDMD but depends on an exosite interface on CASP1 that recognizes and binds the Gasdermin-D, C-terminal (GSDMD-CT) part. Cleavage by CASP8 takes place following inactivation of MAP3K7/TAK1 by Yersinia toxin YopJ. Cleavage at Asp-87 by CASP3 or CASP7 inactivates the ability to mediate pyroptosis, but generates the Gasdermin-D, p13 chain, which translocates to the nucleus and acts as a transcription regulator. Cleavage by papain allergen generates the Gasdermin-D, p40 chain. In terms of processing, palmitoylated at Cys-191 by ZDHHC5 and ZDHHC9 in response to microbial infection and danger signals. Palmitoylation takes place before cleavage by caspases (CASP1, CASP4, CASP5 or CASP8) and is required for membrane translocation and pore formation. Depalmitoylated by LYPLA2. Succination of Cys-191 by the Krebs cycle intermediate fumarate, which leads to S-(2-succinyl)cysteine residues, inhibits processing by caspases, and ability to initiate pyroptosis. Succination modification is catalyzed by a non-enzymatic reaction caused by an accumulation of fumarate. Post-translationally, glycosylated: O-GlcNAcylation by OGT leads to reduced cleavage by CASP4 and decreased LPS-induced endothelial cell pyroptosis. In terms of processing, (Microbial infection) Cleaved and inactivated by Protease 3C from Human enterovirus 71 (EV71), preventing GSDMD-mediated pyroptosis. (Microbial infection) Cleaved and inactivated by the 3C-like proteinase nsp5 from human coronavirus SARS-CoV-2, preventing GSDMD-mediated pyroptosis. Post-translationally, (Microbial infection) Ubiquitinated by S.flexneri IpaH7.8, leading to its degradation by the proteasome. Expressed in the suprabasal cells of esophagus, as well as in the isthmus/neck, pit, and gland of the stomach, suggesting preferential expression in differentiating cells.

It localises to the cytoplasm. The protein resides in the cytosol. Its subcellular location is the inflammasome. The protein localises to the cell membrane. It is found in the secreted. It localises to the mitochondrion membrane. The protein resides in the nucleus. The full-length protein before cleavage is inactive: intramolecular interactions between N- and C-terminal domains mediate autoinhibition in the absence of activation signal. The intrinsic pyroptosis-inducing activity is carried by the released N-terminal moiety (Gasdermin-D, N-terminal) following cleavage by caspases CASP1, CASP4, CASP5 or CASP8. Cleavage at Asp-87 by CASP3 or CASP7 inactivates the ability to mediate pyroptosis. Homooligomerization and pore formation is specifically inhibited by VHH(GSDMD-1) and, to a lesser extent, VHH(GSDMD-2) nanobodies, protecting against excessive pyroptosis. Inhibited by small molecule NU6300, which covalently reacts with Cys-191, thereby preventing palmitoylation and pyroptosis. Precursor of a pore-forming protein that plays a key role in host defense against pathogen infection and danger signals. This form constitutes the precursor of the pore-forming protein: upon cleavage, the released N-terminal moiety (Gasdermin-D, N-terminal) binds to membranes and forms pores, triggering pyroptosis. In terms of biological role, promotes pyroptosis in response to microbial infection and danger signals. Produced by the cleavage of gasdermin-D by inflammatory caspases CASP1, CASP4 or CASP5 in response to canonical, as well as non-canonical (such as cytosolic LPS) inflammasome activators. After cleavage, moves to the plasma membrane where it strongly binds to inner leaflet lipids, including monophosphorylated phosphatidylinositols, such as phosphatidylinositol 4-phosphate, bisphosphorylated phosphatidylinositols, such as phosphatidylinositol (4,5)-bisphosphate, as well as phosphatidylinositol (3,4,5)-bisphosphate, and more weakly to phosphatidic acid and phosphatidylserine. Homooligomerizes within the membrane and forms pores of 10-15 nanometers (nm) of inner diameter, allowing the release of mature interleukin-1 (IL1B and IL18) and triggering pyroptosis. Gasdermin pores also allow the release of mature caspase-7 (CASP7). In some, but not all, cells types, pyroptosis is followed by pyroptotic cell death, which is caused by downstream activation of ninjurin-1 (NINJ1), which mediates membrane rupture (cytolysis). Also forms pores in the mitochondrial membrane, resulting in release of mitochondrial DNA (mtDNA) into the cytosol. Gasdermin-D, N-terminal released from pyroptotic cells into the extracellular milieu rapidly binds to and kills both Gram-negative and Gram-positive bacteria, without harming neighboring mammalian cells, as it does not disrupt the plasma membrane from the outside due to lipid-binding specificity. Under cell culture conditions, also active against intracellular bacteria, such as Listeria monocytogenes. Also active in response to MAP3K7/TAK1 inactivation by Yersinia toxin YopJ, which triggers cleavage by CASP8 and subsequent activation. Required for mucosal tissue defense against enteric pathogens. Activation of the non-canonical inflammasome in brain endothelial cells can lead to excessive pyroptosis, leading to blood-brain barrier breakdown. Strongly binds to bacterial and mitochondrial lipids, including cardiolipin. Does not bind to unphosphorylated phosphatidylinositol, phosphatidylethanolamine nor phosphatidylcholine. Functionally, transcription coactivator produced by the cleavage by CASP3 or CASP7 in the upper small intestine in response to dietary antigens. Required to maintain food tolerance in small intestine: translocates to the nucleus and acts as a coactivator for STAT1 to induce the transcription of CIITA and MHC class II molecules, which in turn induce type 1 regulatory T (Tr1) cells in upper small intestine. Its function is as follows. Produced by the cleavage by papain allergen. After cleavage, moves to the plasma membrane and homooligomerizes within the membrane and forms pores of 10-15 nanometers (nm) of inner diameter, allowing the specific release of mature interleukin-33 (IL33), promoting type 2 inflammatory immune response. The sequence is that of Gasdermin-D from Homo sapiens (Human).